The following is a 331-amino-acid chain: UPF0194 membrane protein YbhG (331 aa).

A signal peptide spans 1 to 19 (MKKPVVIGLVIAAIVAVIA). The stretch at 140 to 209 (RTISANDLEN…DLQDTTLIAP (70 aa)) forms a coiled coil.

Belongs to the UPF0194 family.

The protein localises to the periplasm. This Salmonella typhi protein is UPF0194 membrane protein YbhG (ybhG).